The following is a 390-amino-acid chain: Chorismate synthase 1 (390 aa).

R39 and R45 together coordinate NADP(+). Residues 95-117 are disordered; sequence EQEEKEMKRKVTKPRPGHADLNG. Residues 132–134, 253–254, G298, 313–317, and R339 contribute to the FMN site; these read RSS, NA, and KPIPT.

The protein belongs to the chorismate synthase family. As to quaternary structure, homotetramer. Requires FMNH2 as cofactor.

The catalysed reaction is 5-O-(1-carboxyvinyl)-3-phosphoshikimate = chorismate + phosphate. It participates in metabolic intermediate biosynthesis; chorismate biosynthesis; chorismate from D-erythrose 4-phosphate and phosphoenolpyruvate: step 7/7. Functionally, catalyzes the anti-1,4-elimination of the C-3 phosphate and the C-6 proR hydrogen from 5-enolpyruvylshikimate-3-phosphate (EPSP) to yield chorismate, which is the branch point compound that serves as the starting substrate for the three terminal pathways of aromatic amino acid biosynthesis. This reaction introduces a second double bond into the aromatic ring system. The polypeptide is Chorismate synthase 1 (Bacillus cereus (strain ATCC 10987 / NRS 248)).